A 422-amino-acid polypeptide reads, in one-letter code: Probable protease eep (422 aa).

Histidine 18 contacts Zn(2+). The active site involves glutamate 19. Histidine 22 serves as a coordination point for Zn(2+). 3 helical membrane-spanning segments follow: residues 176 to 196, 349 to 369, and 394 to 414; these read FAGP…AVFL, VVFL…LPIP, and EGII…LVTW. The PDZ domain occupies 179–273; it reads PMNNFILGFI…EEQLTVTPEK (95 aa).

The protein belongs to the peptidase M50B family. Zn(2+) serves as cofactor.

It localises to the cell membrane. Its function is as follows. Involved in production of the peptide pheromone cAD1. The chain is Probable protease eep (eep) from Enterococcus faecalis (strain ATCC 700802 / V583).